The sequence spans 71 residues: MRKSFYTWLMTERNPKSNSPKAILADLAFEEAAFPKHTDDFDEVSRFLEEHASFSFNLGDFDSIWQEYLEH.

The protein belongs to the UPF0346 family.

The sequence is that of UPF0346 protein SP70585_0986 from Streptococcus pneumoniae (strain 70585).